Reading from the N-terminus, the 307-residue chain is MIQSHVSVMLNEMLEALSPKAGESYLDCTFGAGGYSKAILESCNCYVTALDRDPNVIKRAEEIQQNYGERFDFVETNFADSFAKLKEKKFDGIVLDLGVSSMQLDIADRGFSFLHDGPLDMRMSGQGLSAEEFVNAAEEKELADVIYKYGDESFSRRIAKRIVEYRKTARIDSTGKLAEIVRSSIGFRKGKIDPATKTFQAIRIYVNDELGELEQFLVNVKNILKKDGRLVVVSFHSLEDRIVKNFFKENSEKPVVRSKYAKDDMTIDPNKWLKIITNKALAPSDKEVGLNIRARSAKLRAAKAIYE.

Residues 33–35, Asp51, Phe82, Asp96, and Gln103 contribute to the S-adenosyl-L-methionine site; that span reads GGY.

The protein belongs to the methyltransferase superfamily. RsmH family.

It localises to the cytoplasm. The catalysed reaction is cytidine(1402) in 16S rRNA + S-adenosyl-L-methionine = N(4)-methylcytidine(1402) in 16S rRNA + S-adenosyl-L-homocysteine + H(+). Functionally, specifically methylates the N4 position of cytidine in position 1402 (C1402) of 16S rRNA. This Rickettsia rickettsii (strain Iowa) protein is Ribosomal RNA small subunit methyltransferase H.